The sequence spans 402 residues: Tryptophan synthase beta chain (402 aa).

Lysine 91 bears the N6-(pyridoxal phosphate)lysine mark.

This sequence belongs to the TrpB family. As to quaternary structure, tetramer of two alpha and two beta chains. Pyridoxal 5'-phosphate is required as a cofactor.

The catalysed reaction is (1S,2R)-1-C-(indol-3-yl)glycerol 3-phosphate + L-serine = D-glyceraldehyde 3-phosphate + L-tryptophan + H2O. It functions in the pathway amino-acid biosynthesis; L-tryptophan biosynthesis; L-tryptophan from chorismate: step 5/5. Functionally, the beta subunit is responsible for the synthesis of L-tryptophan from indole and L-serine. In Streptococcus thermophilus (strain CNRZ 1066), this protein is Tryptophan synthase beta chain.